A 253-amino-acid chain; its full sequence is DNA polymerase sliding clamp (253 aa).

The protein belongs to the PCNA family. Homotrimer. The subunits circularize to form a toroid; DNA passes through its center. Replication factor C (RFC) is required to load the toroid on the DNA.

Sliding clamp subunit that acts as a moving platform for DNA processing. Responsible for tethering the catalytic subunit of DNA polymerase and other proteins to DNA during high-speed replication. The chain is DNA polymerase sliding clamp from Methanopyrus kandleri (strain AV19 / DSM 6324 / JCM 9639 / NBRC 100938).